The chain runs to 311 residues: 4-hydroxyproline 2-epimerase (311 aa).

C88 acts as the Proton acceptor in catalysis. Residues G89 to H90, H208, and D232 contribute to the substrate site. The active-site Proton donor is the C236. Residue G237–T238 coordinates substrate.

It belongs to the proline racemase family.

It catalyses the reaction trans-4-hydroxy-L-proline = cis-4-hydroxy-D-proline. Its function is as follows. Catalyzes the epimerization of trans-4-hydroxy-L-proline (t4LHyp) to cis-4-hydroxy-D-proline (c4DHyp). Is likely involved in a degradation pathway that converts t4LHyp to alpha-ketoglutarate. Displays no proline racemase activity. The chain is 4-hydroxyproline 2-epimerase from Chromohalobacter salexigens (strain ATCC BAA-138 / DSM 3043 / CIP 106854 / NCIMB 13768 / 1H11).